The primary structure comprises 338 residues: NADPH dehydrogenase (338 aa).

23 to 26 (SPMC) serves as a coordination point for FMN. Substrate is bound at residue Tyr28. Residues Ala60 and Gln102 each coordinate FMN. 164 to 167 (HAAH) lines the substrate pocket. FMN contacts are provided by residues Arg215 and 307–308 (GR).

The protein belongs to the NADH:flavin oxidoreductase/NADH oxidase family. NamA subfamily. As to quaternary structure, homotetramer. Composed of a dimer of active dimers. FMN is required as a cofactor.

It catalyses the reaction A + NADPH + H(+) = AH2 + NADP(+). Inhibited by p-hydroxybenzaldehyde (pHBA) and p-nitrophenol (pNP). Catalyzes the reduction of the double bond of an array of alpha,beta-unsaturated aldehydes and ketones. It also reduces the nitro group of nitroester and nitroaromatic compounds. It could have a role in detoxification processes. This Bacillus subtilis (strain 168) protein is NADPH dehydrogenase (namA).